Consider the following 252-residue polypeptide: tRNA-cytidine(32) 2-sulfurtransferase (252 aa).

The PP-loop motif signature appears at 37-42; sequence SGGKDS. Positions 112, 115, and 202 each coordinate [4Fe-4S] cluster.

It belongs to the TtcA family. As to quaternary structure, homodimer. Mg(2+) serves as cofactor. Requires [4Fe-4S] cluster as cofactor.

It localises to the cytoplasm. It carries out the reaction cytidine(32) in tRNA + S-sulfanyl-L-cysteinyl-[cysteine desulfurase] + AH2 + ATP = 2-thiocytidine(32) in tRNA + L-cysteinyl-[cysteine desulfurase] + A + AMP + diphosphate + H(+). The protein operates within tRNA modification. Its function is as follows. Catalyzes the ATP-dependent 2-thiolation of cytidine in position 32 of tRNA, to form 2-thiocytidine (s(2)C32). The sulfur atoms are provided by the cysteine/cysteine desulfurase (IscS) system. This chain is tRNA-cytidine(32) 2-sulfurtransferase, found in Geotalea uraniireducens (strain Rf4) (Geobacter uraniireducens).